The primary structure comprises 131 residues: MPVTDSIADYITRIRNAGRAKNSTTDIPYSKLKENISQLLLEKGYIKNFTVITTEKFPFLRIDLKYMQSGEPAIKELTRVSKPGRRVYDGKDIKKYLGGLGLYVLSSSKGVITDKEARAQGVGGEILFRIY.

It belongs to the universal ribosomal protein uS8 family. As to quaternary structure, part of the 30S ribosomal subunit. Contacts proteins S5 and S12.

Functionally, one of the primary rRNA binding proteins, it binds directly to 16S rRNA central domain where it helps coordinate assembly of the platform of the 30S subunit. In Chlorobium chlorochromatii (strain CaD3), this protein is Small ribosomal subunit protein uS8.